Consider the following 476-residue polypeptide: Bifunctional protein GlmU (476 aa).

The tract at residues 1 to 235 (MTALDIIIMA…ALQVAGVNSP (235 aa)) is pyrophosphorylase. UDP-N-acetyl-alpha-D-glucosamine is bound by residues K23, Q81, 86–87 (GT), 108–110 (SGD), G145, E160, and N233. D110 lines the Mg(2+) pocket. N233 lines the Mg(2+) pocket. The segment at 236–256 (AQLADLERAHQRAQAAALMEQ) is linker. An N-acetyltransferase region spans residues 257-476 (GVRLADPARF…WKRPAKQAKG (220 aa)). UDP-N-acetyl-alpha-D-glucosamine contacts are provided by R351 and K369. H381 functions as the Proton acceptor in the catalytic mechanism. UDP-N-acetyl-alpha-D-glucosamine-binding residues include Y384 and N395. Residues A398, 404–405 (NY), S423, G441, and R458 contribute to the acetyl-CoA site.

The protein in the N-terminal section; belongs to the N-acetylglucosamine-1-phosphate uridyltransferase family. It in the C-terminal section; belongs to the transferase hexapeptide repeat family. As to quaternary structure, homotrimer. Mg(2+) serves as cofactor.

It localises to the cytoplasm. The catalysed reaction is alpha-D-glucosamine 1-phosphate + acetyl-CoA = N-acetyl-alpha-D-glucosamine 1-phosphate + CoA + H(+). The enzyme catalyses N-acetyl-alpha-D-glucosamine 1-phosphate + UTP + H(+) = UDP-N-acetyl-alpha-D-glucosamine + diphosphate. It participates in nucleotide-sugar biosynthesis; UDP-N-acetyl-alpha-D-glucosamine biosynthesis; N-acetyl-alpha-D-glucosamine 1-phosphate from alpha-D-glucosamine 6-phosphate (route II): step 2/2. The protein operates within nucleotide-sugar biosynthesis; UDP-N-acetyl-alpha-D-glucosamine biosynthesis; UDP-N-acetyl-alpha-D-glucosamine from N-acetyl-alpha-D-glucosamine 1-phosphate: step 1/1. It functions in the pathway bacterial outer membrane biogenesis; LPS lipid A biosynthesis. In terms of biological role, catalyzes the last two sequential reactions in the de novo biosynthetic pathway for UDP-N-acetylglucosamine (UDP-GlcNAc). The C-terminal domain catalyzes the transfer of acetyl group from acetyl coenzyme A to glucosamine-1-phosphate (GlcN-1-P) to produce N-acetylglucosamine-1-phosphate (GlcNAc-1-P), which is converted into UDP-GlcNAc by the transfer of uridine 5-monophosphate (from uridine 5-triphosphate), a reaction catalyzed by the N-terminal domain. The sequence is that of Bifunctional protein GlmU from Acidovorax sp. (strain JS42).